The sequence spans 349 residues: N-acetyltaurine hydrolase (349 aa).

A divalent metal cation is bound by residues H26, H28, E169, H201, H230, and D298.

This sequence belongs to the metallo-dependent hydrolases superfamily. Phosphotriesterase family. It depends on a divalent metal cation as a cofactor.

Its subcellular location is the cytoplasm. It is found in the cytosol. It catalyses the reaction N-acetyltaurine + H2O = taurine + acetate. The catalysed reaction is N-propanoyltaurine + H2O = propanoate + taurine. It carries out the reaction N-acetyl-L-methionine + H2O = L-methionine + acetate. The enzyme catalyses N-acetyl-L-isoleucine + H2O = L-isoleucine + acetate. It catalyses the reaction N-acetyl-L-leucine + H2O = L-leucine + acetate. The catalysed reaction is N-acetyl-L-valine + H2O = L-valine + acetate. N-acetyltaurine hydrolase that regulates feeding by catalyzing the hydrolysis of N-acetyltaurine into taurine and acetate. N-acetyltaurine has anorexigenic and anti-obesity effects that are dependent on GFRAL receptor and GDF15. PTER also acts on other N-acetyl amino acids (Met, Ile, Leu, Val) and N-propionyltaurine, but at lower rates. The chain is N-acetyltaurine hydrolase (PTER) from Bos taurus (Bovine).